Consider the following 1195-residue polypeptide: EST/SMG-like protein 2 (1195 aa).

3 stretches are compositionally biased toward polar residues: residues 1–10 (MPETSVQNPL), 18–35 (TRSM…SATP), and 55–68 (VLNP…SNSV). Disordered regions lie at residues 1–38 (MPET…PSFP), 55–130 (VLNP…VGIT), 179–268 (SKSE…PASN), and 610–643 (DKKE…DEIM). Basic and acidic residues-rich tracts occupy residues 83–109 (RFSD…EKNP) and 197–208 (INDKDNSARDQD). Composition is skewed to low complexity over residues 210–252 (NNSG…NNSD) and 619–629 (NNDSSVTESST). The PINc domain maps to 1025 to 1164 (TYFVFDATSW…LISDDDAMKK (140 aa)).

As to quaternary structure, transiently interacts with PEX14.

It is found in the cytoplasm. It localises to the nucleus. Its subcellular location is the peroxisome. Its function is as follows. May be involved in the regulation of gene expression responses of environment-sensing pathways. The chain is EST/SMG-like protein 2 from Saccharomyces cerevisiae (strain ATCC 204508 / S288c) (Baker's yeast).